A 246-amino-acid polypeptide reads, in one-letter code: Ribosomal RNA small subunit methyltransferase J (246 aa).

Residues 115–116 and D169 contribute to the S-adenosyl-L-methionine site; that span reads ER.

This sequence belongs to the methyltransferase superfamily. RsmJ family.

Its subcellular location is the cytoplasm. The enzyme catalyses guanosine(1516) in 16S rRNA + S-adenosyl-L-methionine = N(2)-methylguanosine(1516) in 16S rRNA + S-adenosyl-L-homocysteine + H(+). Its function is as follows. Specifically methylates the guanosine in position 1516 of 16S rRNA. In Buchnera aphidicola subsp. Acyrthosiphon pisum (strain APS) (Acyrthosiphon pisum symbiotic bacterium), this protein is Ribosomal RNA small subunit methyltransferase J.